Consider the following 281-residue polypeptide: Probable replication-associated protein repA1 (281 aa).

Belongs to the IncFII RepA family.

In terms of biological role, this protein is essential for plasmid replication; it is involved in copy control functions. This Buchnera aphidicola subsp. Cinara cedri (strain Cc) protein is Probable replication-associated protein repA1 (repA1).